The primary structure comprises 324 residues: UDP-N-acetylenolpyruvoylglucosamine reductase (324 aa).

The 168-residue stretch at 36-203 folds into the FAD-binding PCMH-type domain; the sequence is FRAGGLAELM…THAIFEGYAE (168 aa). Arg183 is an active-site residue. Ser232 serves as the catalytic Proton donor. Residue Glu302 is part of the active site.

It belongs to the MurB family. Requires FAD as cofactor.

The protein resides in the cytoplasm. The catalysed reaction is UDP-N-acetyl-alpha-D-muramate + NADP(+) = UDP-N-acetyl-3-O-(1-carboxyvinyl)-alpha-D-glucosamine + NADPH + H(+). It functions in the pathway cell wall biogenesis; peptidoglycan biosynthesis. Its function is as follows. Cell wall formation. The protein is UDP-N-acetylenolpyruvoylglucosamine reductase of Rhizobium meliloti (strain 1021) (Ensifer meliloti).